We begin with the raw amino-acid sequence, 564 residues long: Malignant brain tumor repeat protein 1 (564 aa).

MBT repeat units lie at residues 64–176 (FTWS…MKWL), 205–327 (RPTE…TKAT), 331–442 (LEHS…LDRL), and 450–549 (FKWE…LRHP).

As to quaternary structure, interacts with histone H3 that is trimethylated at 'Lys-9' (H3K9me3).

This chain is Malignant brain tumor repeat protein 1 (mbtr-1), found in Caenorhabditis elegans.